Reading from the N-terminus, the 374-residue chain is Putative glutamate--cysteine ligase 2 (374 aa).

Belongs to the glutamate--cysteine ligase type 2 family. YbdK subfamily.

It catalyses the reaction L-cysteine + L-glutamate + ATP = gamma-L-glutamyl-L-cysteine + ADP + phosphate + H(+). In terms of biological role, ATP-dependent carboxylate-amine ligase which exhibits weak glutamate--cysteine ligase activity. The polypeptide is Putative glutamate--cysteine ligase 2 (Acidovorax sp. (strain JS42)).